A 144-amino-acid polypeptide reads, in one-letter code: Alpha-crystallin (144 aa).

One can recognise a sHSP domain in the interval 33–143; it reads PTFDTRLMRL…TEKHIQIRST (111 aa).

Belongs to the small heat shock protein (HSP20) family.

The protein resides in the secreted. Its subcellular location is the cell wall. The protein localises to the cytoplasm. Functionally, acts as a chaperone. This Mycobacterium bovis (strain ATCC BAA-935 / AF2122/97) protein is Alpha-crystallin (hspX).